A 121-amino-acid polypeptide reads, in one-letter code: uncharacterized protein (121 aa).

This is an uncharacterized protein from Archaeoglobus fulgidus (strain ATCC 49558 / DSM 4304 / JCM 9628 / NBRC 100126 / VC-16).